The following is a 464-amino-acid chain: Heterogeneous nuclear ribonucleoprotein K (464 aa).

N-acetylmethionine is present on Met1. Positions 1–37 are disordered; it reads METEQPEETFPNTETNGEFGKRPAEDMEEEQAFKRSR. Residues 1-276 are necessary for interaction with DDX1; the sequence is METEQPEETF…GRGGRPMPPS (276 aa). Positions 19 to 37 are enriched in basic and acidic residues; the sequence is FGKRPAEDMEEEQAFKRSR. Lys34 carries the post-translational modification N6-acetyllysine; alternate. Lys34 participates in a covalent cross-link: Glycyl lysine isopeptide (Lys-Gly) (interchain with G-Cter in SUMO1); alternate. A Glycyl lysine isopeptide (Lys-Gly) (interchain with G-Cter in SUMO2); alternate cross-link involves residue Lys34. At Ser36 the chain carries Phosphoserine. Phosphothreonine is present on Thr39. In terms of domain architecture, KH 1 spans 42–104; it reads MVELRILLQS…ETIGEILKKI (63 aa). Residues Lys52 and Lys60 each participate in a glycyl lysine isopeptide (Lys-Gly) (interchain with G-Cter in SUMO2) cross-link. Repeat copies occupy residues 54–76 and 59–62. Positions 54–421 are 2 X 22 AA approximate repeats; the sequence is AGAVIGKGGK…QIRHESGASI (368 aa). A 5 X 4 AA repeats of G-X-G-G region spans residues 59–407; sequence GKGGKNIKAL…LAGSIIGKGG (349 aa). A phosphoserine mark is found at Ser75 and Ser116. One can recognise a KH 2 domain in the interval 144 to 209; the sequence is DCELRLLIHQ…DRVVECIKII (66 aa). A Glycyl lysine isopeptide (Lys-Gly) (interchain with G-Cter in SUMO1); alternate cross-link involves residue Lys163. Lys163 is covalently cross-linked (Glycyl lysine isopeptide (Lys-Gly) (interchain with G-Cter in SUMO2); alternate). An N6-acetyllysine modification is found at Lys198. Phosphoserine is present on residues Ser214 and Ser216. Lys219 is covalently cross-linked (Glycyl lysine isopeptide (Lys-Gly) (interchain with G-Cter in SUMO2); alternate). Lys219 is subject to N6-succinyllysine; alternate. Residues 236–273 form an RNA-binding RGG-box region; that stretch reads YGGFTMMFDDRRGRPVGFPMRGRGGFDRMPPGRGGRPM. 3 consecutive repeat copies span residues 245–250, 257–260, and 267–270. Positions 245–329 are 2 X 6 AA approximate repeats; that stretch reads DRRGRPVGFP…LMAYDRRGRP (85 aa). The tract at residues 250 to 329 is disordered; sequence PVGFPMRGRG…LMAYDRRGRP (80 aa). Over residues 252–266 the composition is skewed to low complexity; it reads GFPMRGRGGFDRMPP. Residues 276 to 285 show a composition bias toward basic and acidic residues; the sequence is SRRDYDDMSP. At Ser284 the chain carries Phosphoserine. Residues 295–298 form a 3-4 repeat; sequence GRGG. The residue at position 316 (Arg316) is an Omega-N-methylarginine. The 2-2 repeat unit spans residues 324 to 329; the sequence is DRRGRP. Arg377 is subject to Omega-N-methylarginine. Position 379 is a phosphoserine (Ser379). Position 380 is a phosphotyrosine (Tyr380). The region spanning 387 to 451 is the KH 3 domain; that stretch reads IITTQVTIPK…DQIQNAQYLL (65 aa). 2 consecutive repeat copies span residues 399–421 and 404–407. An N6-acetyllysine; alternate modification is found at Lys405. A Glycyl lysine isopeptide (Lys-Gly) (interchain with G-Cter in SUMO2); alternate cross-link involves residue Lys405. Ser420 is modified (phosphoserine). Lys422 participates in a covalent cross-link: Glycyl lysine isopeptide (Lys-Gly) (interchain with G-Cter in SUMO1); alternate. A Glycyl lysine isopeptide (Lys-Gly) (interchain with G-Cter in SUMO2); alternate cross-link involves residue Lys422. A Glycyl lysine isopeptide (Lys-Gly) (interchain with G-Cter in SUMO); alternate cross-link involves residue Lys422.

Identified in the spliceosome C complex. Interacts with ANKRD28, RBM42 and ZIK1. Interacts with DDX1. Interacts with MDM2; this interaction leads to ubiquitination and proteasomal degradation. Interacts with p53/TP53. Interacts with BRDT. Interacts with IVNS1ABP. Interacts with PPIA/CYPA. Part of a transcription inhibitory ribonucleoprotein complex composed at least of the circular RNA circZNF827, ZNF827 and HNRNPL. Post-translationally, sumoylated by CBX4. Sumoylation is increased upon DNA damage, such as that produced by doxorubicin, etoposide, UV light and camptothecin, due to enhanced CBX4 phosphorylation by HIPK2 under these conditions. Ubiquitinated by MDM2. Doxorubicin treatment does not affect monoubiquitination, but slightly decreases HNRNPK poly-ubiquitination. In terms of processing, O-glycosylated (O-GlcNAcylated), in a cell cycle-dependent manner.

It is found in the cytoplasm. It localises to the nucleus. Its subcellular location is the nucleoplasm. The protein resides in the cell projection. The protein localises to the podosome. Its function is as follows. One of the major pre-mRNA-binding proteins. Binds tenaciously to poly(C) sequences. Likely to play a role in the nuclear metabolism of hnRNAs, particularly for pre-mRNAs that contain cytidine-rich sequences. Can also bind poly(C) single-stranded DNA. Plays an important role in p53/TP53 response to DNA damage, acting at the level of both transcription activation and repression. When sumoylated, acts as a transcriptional coactivator of p53/TP53, playing a role in p21/CDKN1A and 14-3-3 sigma/SFN induction. As far as transcription repression is concerned, acts by interacting with long intergenic RNA p21 (lincRNA-p21), a non-coding RNA induced by p53/TP53. This interaction is necessary for the induction of apoptosis, but not cell cycle arrest. As part of a ribonucleoprotein complex composed at least of ZNF827, HNRNPL and the circular RNA circZNF827 that nucleates the complex on chromatin, may negatively regulate the transcription of genes involved in neuronal differentiation. This chain is Heterogeneous nuclear ribonucleoprotein K (HNRNPK), found in Macaca fascicularis (Crab-eating macaque).